The sequence spans 449 residues: Elongation factor 1-alpha 1 (449 aa).

In terms of domain architecture, tr-type G spans 5–230; it reads KFHINIVVIG…DQINEPKRPS (226 aa). The interval 14–21 is G1; that stretch reads GHVDSGKS. 14 to 21 is a GTP binding site; sequence GHVDSGKS. N6,N6-dimethyllysine is present on K55. The interval 70–74 is G2; sequence GITID. N6,N6,N6-trimethyllysine is present on K79. Positions 91–94 are G3; it reads DAPG. GTP is bound by residues 91-95 and 153-156; these read DAPGH and NKMD. Residues 153-156 are G4; sequence NKMD. The residue at position 187 (K187) is an N6,N6,N6-trimethyllysine. Residues 194–196 are G5; sequence SGF. Residue K261 is modified to N6-methyllysine. K306 and K396 each carry N6,N6,N6-trimethyllysine. Residues K438 and K441 each participate in a glycyl lysine isopeptide (Lys-Gly) (interchain with G-Cter in ubiquitin) cross-link.

The protein belongs to the TRAFAC class translation factor GTPase superfamily. Classic translation factor GTPase family. EF-Tu/EF-1A subfamily.

The protein localises to the cytoplasm. In terms of biological role, this protein promotes the GTP-dependent binding of aminoacyl-tRNA to the A-site of ribosomes during protein biosynthesis. The polypeptide is Elongation factor 1-alpha 1 (A1) (Arabidopsis thaliana (Mouse-ear cress)).